Consider the following 212-residue polypeptide: F420-dependent NADP reductase (212 aa).

NADP(+) is bound by residues 9-12 (TGNL), 31-32 (SR), K36, I72, H76, V98, and A137. A coenzyme F420-(gamma-Glu)n-binding site is contributed by L207.

Belongs to the F420-dependent NADP reductase family. Homodimer.

The enzyme catalyses reduced coenzyme F420-(gamma-L-Glu)(n) + NADP(+) = oxidized coenzyme F420-(gamma-L-Glu)(n) + NADPH + 2 H(+). Catalyzes the reversible reduction of NADP(+) by F420H(2). In this reaction the proS hydrogen at C5 of F420 is transferred into the proS position at C4 of NADPH. In Archaeoglobus fulgidus (strain ATCC 49558 / DSM 4304 / JCM 9628 / NBRC 100126 / VC-16), this protein is F420-dependent NADP reductase (fno).